The primary structure comprises 485 residues: D-alanine--D-alanyl carrier protein ligase (485 aa).

144-145 lines the ATP pocket; that stretch reads TS. A D-alanine-binding site is contributed by Asp189. 284–289 provides a ligand contact to ATP; sequence NTYGPT. Residue Val293 participates in D-alanine binding. ATP is bound by residues Asp365 and Lys473. Lys473 contributes to the D-alanine binding site.

This sequence belongs to the ATP-dependent AMP-binding enzyme family. DltA subfamily.

It is found in the cytoplasm. It carries out the reaction holo-[D-alanyl-carrier protein] + D-alanine + ATP = D-alanyl-[D-alanyl-carrier protein] + AMP + diphosphate. The protein operates within cell wall biogenesis; lipoteichoic acid biosynthesis. In terms of biological role, catalyzes the first step in the D-alanylation of lipoteichoic acid (LTA), the activation of D-alanine and its transfer onto the D-alanyl carrier protein (Dcp) DltC. In an ATP-dependent two-step reaction, forms a high energy D-alanyl-AMP intermediate, followed by transfer of the D-alanyl residue as a thiol ester to the phosphopantheinyl prosthetic group of the Dcp. D-alanylation of LTA plays an important role in modulating the properties of the cell wall in Gram-positive bacteria, influencing the net charge of the cell wall. The protein is D-alanine--D-alanyl carrier protein ligase of Staphylococcus epidermidis (strain ATCC 35984 / DSM 28319 / BCRC 17069 / CCUG 31568 / BM 3577 / RP62A).